The chain runs to 552 residues: Non-structural protein NS1 (552 aa).

It belongs to the orbivirus non-structural protein NS1 family.

In Antilocapra americana (Pronghorn), this protein is Non-structural protein NS1 (Segment-5).